Consider the following 277-residue polypeptide: Large ribosomal subunit protein uL2 (277 aa).

Residues 222–277 (GSVMNPNDHPHGGGEGKAPVGRKAPSTPWGKPALGLKTRNKKAKSDKLIVRRRNEK) are disordered. Positions 264–277 (AKSDKLIVRRRNEK) are enriched in basic and acidic residues.

The protein belongs to the universal ribosomal protein uL2 family. Part of the 50S ribosomal subunit. Forms a bridge to the 30S subunit in the 70S ribosome.

One of the primary rRNA binding proteins. Required for association of the 30S and 50S subunits to form the 70S ribosome, for tRNA binding and peptide bond formation. It has been suggested to have peptidyltransferase activity; this is somewhat controversial. Makes several contacts with the 16S rRNA in the 70S ribosome. The protein is Large ribosomal subunit protein uL2 of Streptococcus thermophilus (strain CNRZ 1066).